The primary structure comprises 317 residues: Nucleoside ABC transporter permease protein NupC (317 aa).

The next 10 helical transmembrane spans lie at 9–29 (IIVA…IGGV), 35–55 (GIVN…SVVF), 62–82 (MFGS…GALF), 98–118 (IVSG…LLQV), 132–151 (GYWN…IFFT), 155–172 (LPGF…YVLF), 203–223 (AGVL…AQAI), 225–245 (GNFS…AMIF), 251–271 (IGAM…VVGG), and 286–306 (MAPY…AIAP).

This sequence belongs to the binding-protein-dependent transport system permease family. As to quaternary structure, the complex is composed of two ATP-binding proteins (NupA), two transmembrane proteins (NupB and NupC) and a solute-binding protein (BmpA).

Its subcellular location is the cell membrane. Functionally, part of an ABC transporter complex involved in the uptake of all common nucleosides. Responsible for the translocation of the substrate across the membrane. In Lactococcus lactis subsp. cremoris (strain MG1363), this protein is Nucleoside ABC transporter permease protein NupC.